The sequence spans 402 residues: Elongation factor Tu (402 aa).

One can recognise a tr-type G domain in the interval 10 to 212 (KPHVNIGTIG…AVDEYIPTPE (203 aa)). The interval 19-26 (GHVDHGKT) is G1. 19-26 (GHVDHGKT) contributes to the GTP binding site. Residue threonine 26 participates in Mg(2+) binding. The interval 60–64 (GITIA) is G2. A G3 region spans residues 81 to 84 (DCPG). GTP contacts are provided by residues 81-85 (DCPGH) and 136-139 (NKED). The tract at residues 136–139 (NKED) is G4. The interval 177–179 (SAF) is G5.

Belongs to the TRAFAC class translation factor GTPase superfamily. Classic translation factor GTPase family. EF-Tu/EF-1A subfamily. In terms of assembly, monomer.

It is found in the cytoplasm. The catalysed reaction is GTP + H2O = GDP + phosphate + H(+). Functionally, GTP hydrolase that promotes the GTP-dependent binding of aminoacyl-tRNA to the A-site of ribosomes during protein biosynthesis. This Aliarcobacter butzleri (strain RM4018) (Arcobacter butzleri) protein is Elongation factor Tu.